The primary structure comprises 271 residues: Extracellular metalloprotease TRV_06892 (271 aa).

A signal peptide spans 1 to 19; the sequence is MRFSVLLTGLAAAGSIATA. Asn-136 is a glycosylation site (N-linked (GlcNAc...) asparagine). His-185 contacts Zn(2+). Glu-186 is a catalytic residue. His-189 contributes to the Zn(2+) binding site. The N-linked (GlcNAc...) asparagine glycan is linked to Asn-200. Cys-222 and Cys-248 are oxidised to a cystine.

Belongs to the peptidase M43B family.

The protein localises to the secreted. Functionally, secreted metalloproteinase that allows assimilation of proteinaceous substrates. Plays a pivotal role as a pathogenicity determinant during infections and contributes to the ability of the pathogen to persist within the mammalian host. This is Extracellular metalloprotease TRV_06892 from Trichophyton verrucosum (strain HKI 0517).